Here is a 347-residue protein sequence, read N- to C-terminus: GMP reductase (347 aa).

Position 108–131 (108–131 (ADFDKMKQILALSPSLKFICIDVA)) interacts with NADP(+). K(+) is bound by residues glycine 181 and glycine 183. Residue cysteine 186 is the Thioimidate intermediate of the active site. Residue 216-239 (IVSDGGCSVPGDVAKAFGGGADFV) coordinates NADP(+).

It belongs to the IMPDH/GMPR family. GuaC type 1 subfamily. As to quaternary structure, homotetramer.

It catalyses the reaction IMP + NH4(+) + NADP(+) = GMP + NADPH + 2 H(+). In terms of biological role, catalyzes the irreversible NADPH-dependent deamination of GMP to IMP. It functions in the conversion of nucleobase, nucleoside and nucleotide derivatives of G to A nucleotides, and in maintaining the intracellular balance of A and G nucleotides. This is GMP reductase from Yersinia pestis bv. Antiqua (strain Antiqua).